The sequence spans 185 residues: Probable nicotinate-nucleotide adenylyltransferase (185 aa).

It belongs to the NadD family.

It carries out the reaction nicotinate beta-D-ribonucleotide + ATP + H(+) = deamido-NAD(+) + diphosphate. Its pathway is cofactor biosynthesis; NAD(+) biosynthesis; deamido-NAD(+) from nicotinate D-ribonucleotide: step 1/1. Functionally, catalyzes the reversible adenylation of nicotinate mononucleotide (NaMN) to nicotinic acid adenine dinucleotide (NaAD). The polypeptide is Probable nicotinate-nucleotide adenylyltransferase (Cereibacter sphaeroides (strain ATCC 17025 / ATH 2.4.3) (Rhodobacter sphaeroides)).